The chain runs to 667 residues: Bifunctional polymyxin resistance protein ArnA (667 aa).

The interval 1 to 304 (MKAIVFAYHD…EMGIVTDVRL (304 aa)) is formyltransferase ArnAFT. Residue His-104 is the Proton donor; for formyltransferase activity of the active site. Residues Arg-114 and 136–140 (VKKAD) each bind (6R)-10-formyltetrahydrofolate. Residues 314 to 667 (RRTRVLILGV…TAAPKDELNA (354 aa)) form a dehydrogenase ArnADH region. NAD(+)-binding positions include Asp-347 and 368-369 (DI). Residues Ala-393, Tyr-398, and 432 to 433 (TS) each bind UDP-alpha-D-glucuronate. The active-site Proton acceptor; for decarboxylase activity is the Glu-434. UDP-alpha-D-glucuronate contacts are provided by residues Arg-460, Asn-492, 526–535 (KLVDGGAQKR), and Tyr-613. Arg-619 functions as the Proton donor; for decarboxylase activity in the catalytic mechanism.

The protein in the N-terminal section; belongs to the Fmt family. UDP-L-Ara4N formyltransferase subfamily. In the C-terminal section; belongs to the NAD(P)-dependent epimerase/dehydratase family. UDP-glucuronic acid decarboxylase subfamily. As to quaternary structure, homohexamer, formed by a dimer of trimers.

It catalyses the reaction UDP-alpha-D-glucuronate + NAD(+) = UDP-beta-L-threo-pentopyranos-4-ulose + CO2 + NADH. It carries out the reaction UDP-4-amino-4-deoxy-beta-L-arabinose + (6R)-10-formyltetrahydrofolate = UDP-4-deoxy-4-formamido-beta-L-arabinose + (6S)-5,6,7,8-tetrahydrofolate + H(+). The protein operates within nucleotide-sugar biosynthesis; UDP-4-deoxy-4-formamido-beta-L-arabinose biosynthesis; UDP-4-deoxy-4-formamido-beta-L-arabinose from UDP-alpha-D-glucuronate: step 1/3. It functions in the pathway nucleotide-sugar biosynthesis; UDP-4-deoxy-4-formamido-beta-L-arabinose biosynthesis; UDP-4-deoxy-4-formamido-beta-L-arabinose from UDP-alpha-D-glucuronate: step 3/3. Its pathway is bacterial outer membrane biogenesis; lipopolysaccharide biosynthesis. Its function is as follows. Bifunctional enzyme that catalyzes the oxidative decarboxylation of UDP-glucuronic acid (UDP-GlcUA) to UDP-4-keto-arabinose (UDP-Ara4O) and the addition of a formyl group to UDP-4-amino-4-deoxy-L-arabinose (UDP-L-Ara4N) to form UDP-L-4-formamido-arabinose (UDP-L-Ara4FN). The modified arabinose is attached to lipid A and is required for resistance to polymyxin and cationic antimicrobial peptides. The sequence is that of Bifunctional polymyxin resistance protein ArnA from Yersinia pestis bv. Antiqua (strain Antiqua).